The sequence spans 219 residues: Small ribosomal subunit protein uS3c (219 aa).

The region spanning 47–118 is the KH type-2 domain; sequence IRNHVRNSSN…KLRMTLVEVL (72 aa).

This sequence belongs to the universal ribosomal protein uS3 family. Part of the 30S ribosomal subunit.

Its subcellular location is the plastid. It localises to the chloroplast. This Chara vulgaris (Common stonewort) protein is Small ribosomal subunit protein uS3c (rps3).